The primary structure comprises 209 residues: Uracil phosphoribosyltransferase (209 aa).

Residues Arg-79, Arg-104, and Asp-131–Ser-139 each bind 5-phospho-alpha-D-ribose 1-diphosphate. Residues Ile-194 and Gly-199–Ala-201 contribute to the uracil site. A 5-phospho-alpha-D-ribose 1-diphosphate-binding site is contributed by Asp-200.

This sequence belongs to the UPRTase family. Mg(2+) is required as a cofactor.

The enzyme catalyses UMP + diphosphate = 5-phospho-alpha-D-ribose 1-diphosphate + uracil. Its pathway is pyrimidine metabolism; UMP biosynthesis via salvage pathway; UMP from uracil: step 1/1. Allosterically activated by GTP. Its function is as follows. Catalyzes the conversion of uracil and 5-phospho-alpha-D-ribose 1-diphosphate (PRPP) to UMP and diphosphate. The protein is Uracil phosphoribosyltransferase of Streptococcus pneumoniae (strain ATCC BAA-255 / R6).